A 417-amino-acid polypeptide reads, in one-letter code: Diphosphomevalonate decarboxylase 1 (417 aa).

A (R)-5-diphosphomevalonate-binding site is contributed by 22–25 (YWGK). Positions 39–47 (RVSLDPDHL) match the Peroxisomal targeting signal PTS2 motif. (R)-5-diphosphomevalonate is bound by residues Arg-77, 160 to 165 (SGSACR), and Thr-216.

It belongs to the diphosphomevalonate decarboxylase family. Homodimer.

The protein localises to the peroxisome. The catalysed reaction is (R)-5-diphosphomevalonate + ATP = isopentenyl diphosphate + ADP + phosphate + CO2. It functions in the pathway isoprenoid biosynthesis; isopentenyl diphosphate biosynthesis via mevalonate pathway; isopentenyl diphosphate from (R)-mevalonate: step 3/3. Performs the first committed step in the biosynthesis of isoprene-containing compounds such as sterols and terpenoids. Component of the triterpene saponins (e.g. ginsenosides or panaxosides) and phytosterols biosynthetic pathways. Catalyzes the conversion of mevalonate diphosphate to isopentenyl diphosphate (IPP). The protein is Diphosphomevalonate decarboxylase 1 of Panax ginseng (Korean ginseng).